A 366-amino-acid polypeptide reads, in one-letter code: N-methyltransferase fsqC (366 aa).

An N-terminal signal peptide occupies residues 1–18 (MSSNVQDIRGWPPPFANA). Asparagine 270 carries N-linked (GlcNAc...) asparagine glycosylation.

It belongs to the methyltransferase superfamily.

Its pathway is secondary metabolite biosynthesis. N-methyltransferase; part of the gene cluster that mediates the biosynthesis of the isoquinoline alkaloids fumisoquin A, fumisoquin B and fumisoquin C; as well as small amounts of fumipyrrole as a shunt metabolite. The products of the cluster lead to a brown coloration and are important for growth and conidiation. The nonribosomal peptide synthetase-like protein fsqF, which lacks a canonical condensation domain, is required for addition of a serine-derived dehydroalanine moiety to activated tyrosine but is not essential for the subsequent steps leading to isoquinoline formation. A different enzyme, most likely the ATP-grasp enzyme fsqD, is responsible for activation of tyrosine. Three additional enzymes encoded by the fsq cluster, the N-methyltransferase fsqC, the phenol 2-monooxygenase fsqG and the FAD-dependent oxidase fsqB, catalyze the formation of the isoquinoline ring system in the fumisoquins. FsqB converts the fspF thiolation domain-bound (2S,4S,5S)-2-amino-6-(3,4-dihydroxyphenyl)-4-hydroxy-5-(methylamino)hexanoyl into isoquinoline. The cyclization most likely proceeds via a two-step mechanism, beginning with FAD-dependent oxidation of the methyl group to an iminium species followed by electrophilic attack on the deprotonated phenol. The chain is N-methyltransferase fsqC from Aspergillus fumigatus (strain ATCC MYA-4609 / CBS 101355 / FGSC A1100 / Af293) (Neosartorya fumigata).